We begin with the raw amino-acid sequence, 339 residues long: GDP-fucose transporter 1 (339 aa).

8 consecutive transmembrane segments (helical) span residues 9-29 (SVRIAAVVAAYWTISISLVFL), 45-65 (LFVTWYQCVVTVICLFFLSLL), 82-102 (LSVAKQVLPLSAVFVGMITFN), 111-133 (VSFYNVGRSLTTVFNVICTYVIL), 136-156 (STSYKAVICCAVIIGGFLMGV), 165-185 (ISYSGVLFGVLASLCVSLNAI), 209-229 (ACFLFLPLMALLGEIGEVAHF), and 237-257 (FWLMMTIGGVFGIAIGYITGL). Positions 319–339 (AHTIQASKDDKALQEDGQTKV) are disordered. Basic and acidic residues predominate over residues 325 to 339 (SKDDKALQEDGQTKV).

Belongs to the TPT transporter family. SLC35C subfamily.

The protein resides in the golgi apparatus membrane. The catalysed reaction is GMP(out) + GDP-beta-L-fucose(in) = GMP(in) + GDP-beta-L-fucose(out). Antiporter specific for GDP-l-fucose and depending on the concomitant reverse transport of GMP. Involved in GDP-fucose import from the cytoplasm into the Golgi lumen. The chain is GDP-fucose transporter 1 (slc35c1) from Nematostella vectensis (Starlet sea anemone).